The sequence spans 256 residues: Exosome complex component RRP41-like (256 aa).

Belongs to the RNase PH family. As to quaternary structure, probable component of the RNA exosome complex. Highly expressed in imbibed seeds and young seedlings.

The protein resides in the cytoplasm. The protein localises to the nucleus. Functionally, non-catalytic component of the RNA exosome complex which has 3'-&gt;5' exoribonuclease activity and participates in a multitude of cellular RNA processing, maturation and degradation events. In vitro, is a processive phosphorolytic exonuclease and requires a single-stranded poly(A) tail on the substrate RNA for its activity. Plays an important role in seed germination and early seedling growth by mediating specific cytoplasmic mRNA decay of transcripts coding for the abscisic acid (ABA) biosynthetic enzymes NCED5 and NCED6, and the ABA signaling transcription factors ABI3 and ABI4. The protein is Exosome complex component RRP41-like of Arabidopsis thaliana (Mouse-ear cress).